The sequence spans 150 residues: uncharacterized protein (150 aa).

In terms of domain architecture, HTH marR-type spans 1-133; the sequence is MNDILREIGM…ISALLHRVRK (133 aa). The H-T-H motif DNA-binding region spans 47-70; sequence QEKLAEMIKVDRTTAARAIKKLEM.

This is an uncharacterized protein from Bacillus subtilis (strain 168).